The sequence spans 410 residues: ORC1-type DNA replication protein 2 (410 aa).

ATP-binding positions include 60–65 (GIGKTT), Tyr213, and Arg225.

The protein belongs to the CDC6/cdc18 family.

Its function is as follows. Involved in regulation of DNA replication. Binds DNA. The chain is ORC1-type DNA replication protein 2 (orc2) from Aeropyrum pernix (strain ATCC 700893 / DSM 11879 / JCM 9820 / NBRC 100138 / K1).